The primary structure comprises 1406 residues: EF-hand calcium-binding domain-containing protein 5 (1406 aa).

Positions 255-655 are disordered; it reads NKDLPQQQRD…KACEPKPQHV (401 aa). 8 stretches are compositionally biased toward polar residues: residues 258–294, 322–334, 342–354, 362–373, 382–393, 402–414, 422–434, and 442–464; these read LPQQ…SLTG, RRSS…QQRG, RRSSTVEQTRQR, RRSSTVEQTQRR, and RRSS…SLPE. Residues 465 to 477 show a composition bias toward basic and acidic residues; the sequence is QESHRGSITEGSH. Residues 501-513 show a composition bias toward low complexity; that stretch reads DDSGSAGSRRGSG. The span at 564–577 shows a compositional bias: acidic residues; the sequence is QELDEDSTPQLEDD. Composition is skewed to basic and acidic residues over residues 578-598 and 638-655; these read SALK…EEKP and SKRD…PQHV. One can recognise an EF-hand domain in the interval 773-808; that stretch reads RRRILLQAIFEKWDNDGSGFLDLNEVDDLLYTYKEG. Residues D786, D788, S790, and E797 each coordinate Ca(2+).

The sequence is that of EF-hand calcium-binding domain-containing protein 5 (Efcab5) from Mus musculus (Mouse).